A 263-amino-acid polypeptide reads, in one-letter code: Glucosamine-6-phosphate deaminase (263 aa).

The Proton acceptor; for enolization step role is filled by D67. The active-site For ring-opening step is N136. H138 serves as the catalytic Proton acceptor; for ring-opening step. The active-site For ring-opening step is E143.

This sequence belongs to the glucosamine/galactosamine-6-phosphate isomerase family. NagB subfamily. Homohexamer.

It carries out the reaction alpha-D-glucosamine 6-phosphate + H2O = beta-D-fructose 6-phosphate + NH4(+). The protein operates within amino-sugar metabolism; N-acetylneuraminate degradation; D-fructose 6-phosphate from N-acetylneuraminate: step 5/5. In terms of biological role, catalyzes the reversible isomerization-deamination of glucosamine 6-phosphate (GlcN6P) to form fructose 6-phosphate (Fru6P) and ammonium ion. In Shewanella halifaxensis (strain HAW-EB4), this protein is Glucosamine-6-phosphate deaminase.